Here is a 403-residue protein sequence, read N- to C-terminus: Alpha-1-antiproteinase F (403 aa).

A signal peptide spans 1–22; sequence SAIPRGLLLLAGLCCLVFGIMA. Asparagine 55, asparagine 92, asparagine 155, asparagine 222, and asparagine 256 each carry an N-linked (GlcNAc...) asparagine glycan. The interval 358-377 is RCL; sequence GATELEITPHSVPQDLFFNK.

The protein belongs to the serpin family.

Its subcellular location is the secreted. In terms of biological role, inhibits elastase, chymotrypsin, cathepsin G, plasmin, and trypsin. In Cavia porcellus (Guinea pig), this protein is Alpha-1-antiproteinase F.